Consider the following 201-residue polypeptide: Superoxide dismutase [Mn/Fe] (201 aa).

Fe(3+) contacts are provided by H27, H75, D161, and H165. Mn(2+) contacts are provided by H27, H75, D161, and H165.

The protein belongs to the iron/manganese superoxide dismutase family. Homotetramer. Mn(2+) is required as a cofactor. The cofactor is Fe(3+).

The catalysed reaction is 2 superoxide + 2 H(+) = H2O2 + O2. Shows decreasing activity with increasing pH. Slightly inhibited by azide and fluoride at pH 7-8; the inhibition is drastically increased towards lower pH. Functionally, destroys superoxide anion radicals which are normally produced within the cells and which are toxic to biological systems. Catalyzes the dismutation of superoxide anion radicals into O2 and H2O2 by successive reduction and oxidation of the transition metal ion at the active site. The chain is Superoxide dismutase [Mn/Fe] (sodA) from Propionibacterium freudenreichii subsp. shermanii.